Reading from the N-terminus, the 292-residue chain is Pantothenate synthetase (292 aa).

Position 32–39 (32–39) interacts with ATP; that stretch reads MGFLHEGH. The active-site Proton donor is histidine 39. Glutamine 63 provides a ligand contact to (R)-pantoate. Glutamine 63 provides a ligand contact to beta-alanine. 150 to 153 is an ATP binding site; sequence GEKD. Residue glutamine 156 participates in (R)-pantoate binding. Residues valine 179 and 187–190 each bind ATP; that span reads MSSR.

Belongs to the pantothenate synthetase family. As to quaternary structure, homodimer.

It is found in the cytoplasm. It catalyses the reaction (R)-pantoate + beta-alanine + ATP = (R)-pantothenate + AMP + diphosphate + H(+). Its pathway is cofactor biosynthesis; (R)-pantothenate biosynthesis; (R)-pantothenate from (R)-pantoate and beta-alanine: step 1/1. Catalyzes the condensation of pantoate with beta-alanine in an ATP-dependent reaction via a pantoyl-adenylate intermediate. The sequence is that of Pantothenate synthetase from Myxococcus xanthus (strain DK1622).